The chain runs to 90 residues: MVCVPCILLPVLLALYIKFIQPIVFRFLPESWRTTFDALLYPTCPIQIPTASAEDATTVAAGKSVKVDGENVQKELDNYDNCTDSSKKNK.

The protein belongs to the UPF0729 family.

The protein is UPF0729 protein Bm1_03610 of Brugia malayi (Filarial nematode worm).